Here is a 232-residue protein sequence, read N- to C-terminus: Large ribosomal subunit protein uL1 (232 aa).

Belongs to the universal ribosomal protein uL1 family. In terms of assembly, part of the 50S ribosomal subunit.

Its function is as follows. Binds directly to 23S rRNA. The L1 stalk is quite mobile in the ribosome, and is involved in E site tRNA release. Functionally, protein L1 is also a translational repressor protein, it controls the translation of the L11 operon by binding to its mRNA. This is Large ribosomal subunit protein uL1 from Roseobacter denitrificans (strain ATCC 33942 / OCh 114) (Erythrobacter sp. (strain OCh 114)).